Consider the following 149-residue polypeptide: Large ribosomal subunit protein bL9 (149 aa).

This sequence belongs to the bacterial ribosomal protein bL9 family.

Binds to the 23S rRNA. In Helicobacter pylori (strain G27), this protein is Large ribosomal subunit protein bL9.